The sequence spans 137 residues: Large ribosomal subunit protein uL16 (137 aa).

It belongs to the universal ribosomal protein uL16 family. Part of the 50S ribosomal subunit.

Functionally, binds 23S rRNA and is also seen to make contacts with the A and possibly P site tRNAs. The polypeptide is Large ribosomal subunit protein uL16 (Beijerinckia indica subsp. indica (strain ATCC 9039 / DSM 1715 / NCIMB 8712)).